The following is a 185-amino-acid chain: MTRPSRLLETAAPPPQPSEEMIAAESDMVVILSALLCALICVAGLAAVVRCAWLRRFTAGGDSPSPNKGLKKKALQSLPRSTFTAAESTSGAAAEEGDSTECAICLTDFADGEEIRVLPLCGHSFHVECIDKWLVSRSSCPSCRRILTPVRCDRCGHASTAEMKDQAHRHQHHQHSSTTIPTFLP.

Residues 29 to 49 (VVILSALLCALICVAGLAAVV) traverse the membrane as a helical segment. The segment at 102–144 (CAICLTDFADGEEIRVLPLCGHSFHVECIDKWLVSRSSCPSCR) adopts an RING-type; atypical zinc-finger fold. Residues 163 to 185 (MKDQAHRHQHHQHSSTTIPTFLP) form a disordered region. Polar residues predominate over residues 176–185 (SSTTIPTFLP).

The protein belongs to the RING-type zinc finger family. ATL subfamily. As to quaternary structure, interacts with BIK1. Post-translationally, auto-monoubiquitination. As to expression, expressed in stems, flowers and green siliques.

It is found in the membrane. It catalyses the reaction S-ubiquitinyl-[E2 ubiquitin-conjugating enzyme]-L-cysteine + [acceptor protein]-L-lysine = [E2 ubiquitin-conjugating enzyme]-L-cysteine + N(6)-ubiquitinyl-[acceptor protein]-L-lysine.. It participates in protein modification; protein ubiquitination. Functionally, E3 ubiquitin-protein ligase that possess E3 ubiquitin ligase activity in vitro and mediates protein monoubiquitination. Triggers the monoubiquitination of phosphorylated BIK1 in response to pathogen-associated molecular pattern (PAMP) detection. The protein is Probable E3 ubiquitin-protein ligase ATL44 of Arabidopsis thaliana (Mouse-ear cress).